A 270-amino-acid chain; its full sequence is 4-hydroxy-tetrahydrodipicolinate reductase (270 aa).

NAD(+) is bound by residues 9–14 (GAGGRM) and Glu-35. Residue Arg-36 participates in NADP(+) binding. NAD(+) is bound by residues 99–101 (GTT) and 123–126 (ASNY). His-156 functions as the Proton donor/acceptor in the catalytic mechanism. His-157 contacts (S)-2,3,4,5-tetrahydrodipicolinate. Lys-160 functions as the Proton donor in the catalytic mechanism. Residue 166–167 (GT) coordinates (S)-2,3,4,5-tetrahydrodipicolinate.

It belongs to the DapB family.

It localises to the cytoplasm. It carries out the reaction (S)-2,3,4,5-tetrahydrodipicolinate + NAD(+) + H2O = (2S,4S)-4-hydroxy-2,3,4,5-tetrahydrodipicolinate + NADH + H(+). It catalyses the reaction (S)-2,3,4,5-tetrahydrodipicolinate + NADP(+) + H2O = (2S,4S)-4-hydroxy-2,3,4,5-tetrahydrodipicolinate + NADPH + H(+). The protein operates within amino-acid biosynthesis; L-lysine biosynthesis via DAP pathway; (S)-tetrahydrodipicolinate from L-aspartate: step 4/4. Its function is as follows. Catalyzes the conversion of 4-hydroxy-tetrahydrodipicolinate (HTPA) to tetrahydrodipicolinate. The sequence is that of 4-hydroxy-tetrahydrodipicolinate reductase from Histophilus somni (strain 129Pt) (Haemophilus somnus).